The sequence spans 563 residues: Dihydroxy-acid dehydratase (563 aa).

Mg(2+) is bound at residue D78. A [2Fe-2S] cluster-binding site is contributed by C119. Residues D120 and K121 each contribute to the Mg(2+) site. N6-carboxylysine is present on K121. Position 191 (C191) interacts with [2Fe-2S] cluster. E442 provides a ligand contact to Mg(2+). The active-site Proton acceptor is S468.

It belongs to the IlvD/Edd family. As to quaternary structure, homodimer. It depends on [2Fe-2S] cluster as a cofactor. Mg(2+) is required as a cofactor.

The enzyme catalyses (2R)-2,3-dihydroxy-3-methylbutanoate = 3-methyl-2-oxobutanoate + H2O. It carries out the reaction (2R,3R)-2,3-dihydroxy-3-methylpentanoate = (S)-3-methyl-2-oxopentanoate + H2O. The protein operates within amino-acid biosynthesis; L-isoleucine biosynthesis; L-isoleucine from 2-oxobutanoate: step 3/4. It functions in the pathway amino-acid biosynthesis; L-valine biosynthesis; L-valine from pyruvate: step 3/4. Its function is as follows. Functions in the biosynthesis of branched-chain amino acids. Catalyzes the dehydration of (2R,3R)-2,3-dihydroxy-3-methylpentanoate (2,3-dihydroxy-3-methylvalerate) into 2-oxo-3-methylpentanoate (2-oxo-3-methylvalerate) and of (2R)-2,3-dihydroxy-3-methylbutanoate (2,3-dihydroxyisovalerate) into 2-oxo-3-methylbutanoate (2-oxoisovalerate), the penultimate precursor to L-isoleucine and L-valine, respectively. The sequence is that of Dihydroxy-acid dehydratase from Desulfitobacterium hafniense (strain DSM 10664 / DCB-2).